A 206-amino-acid polypeptide reads, in one-letter code: Endoplasmic reticulum transmembrane protein 1 (206 aa).

At 1–7 the chain is on the lumenal side; sequence MSLYFTT. The chain crosses the membrane as a helical span at residues 8–28; that stretch reads LFLLLTVEMVMLFIFVLPLPF. Topologically, residues 29-45 are cytoplasmic; that stretch reads RIRRGIFSTYNQLTAKQ. The chain crosses the membrane as a helical span at residues 46–66; the sequence is QIKTIIFITGCLVGLLFIDSW. Residues 67-104 lie on the Lumenal side of the membrane; the sequence is KRSQIRVSLYHNDNSGSIGSSAVTPIQALASRAYNQRN. The chain crosses the membrane as a helical span at residues 105–125; it reads MYISGFILYFSICIPTVMSIV. Residues 126-206 are Cytoplasmic-facing; that stretch reads KRLVKYQGLI…AAAEASKKGN (81 aa). The segment at 140–163 is disordered; sequence KQKLNKPSSNSKKDSNEADSTKLQ. A compositionally biased stretch (basic and acidic residues) spans 150–163; the sequence is SKKDSNEADSTKLQ. Residue Lys-190 forms a Glycyl lysine isopeptide (Lys-Gly) (interchain with G-Cter in ubiquitin) linkage. The Di-lysine motif motif lies at 203-206; the sequence is KKGN.

This sequence belongs to the BCAP29/BCAP31 family.

The protein localises to the endoplasmic reticulum membrane. Functionally, may play a role in anterograde transport of membrane proteins from the endoplasmic reticulum to the Golgi. The protein is Endoplasmic reticulum transmembrane protein 1 (YET1) of Saccharomyces cerevisiae (strain ATCC 204508 / S288c) (Baker's yeast).